A 147-amino-acid polypeptide reads, in one-letter code: MFQGSHAITMDAKGRMAIPAKYRDTLADACEGRIVVTAHTQDRCLLVYPETEWAEILPKIEALPSFNKAALRAQRLLIGYATTLELDGNGRVLLPPTLRDYANFDKKLMLVGLGKKFELWSEEAWFASIADVDDGDELPQEMLTLSL.

2 consecutive SpoVT-AbrB domains span residues 5-52 (SHAI…PETE) and 81-124 (ATTL…SEEA).

Belongs to the MraZ family. Forms oligomers.

It localises to the cytoplasm. The protein localises to the nucleoid. The sequence is that of Transcriptional regulator MraZ from Saccharophagus degradans (strain 2-40 / ATCC 43961 / DSM 17024).